The primary structure comprises 391 residues: Paired box protein Pax-5 (391 aa).

Residues 1 to 21 (MDLEKNYPTPRTSRTGHGGVN) form a disordered region. Residues 16-142 (GHGGVNQLGG…SSINRIIRTK (127 aa)) constitute a DNA-binding region (paired). The interval 19–75 (GVNQLGGVFVNGRPLPDVVRQRIVELAHQGVRPCDISRQLRVSHGCVSKILGRYYET) is PAI subdomain. Residues 94–142 (KVVEKIAEYKRQNPTMFAWEIRDRLLAERVCDNDTVPSVSSINRIIRTK) form an RED subdomain region. The tract at residues 182 to 218 (SGILGITSPSADTNKRKRDEGIQESPVPNGHSLPGRD) is disordered.

In terms of assembly, interacts with ETS1; this interaction alters PAX5 DNA-binding properties. Binds DNA as a monomer. Interacts with TBP; this interaction allows PAX5 to interact with the basal transcription machinery. Interacts with RB1. Interacts with TLE4. Interacts with DAXX. (Microbial infection) Interacts (via N-terminus) with Epstein-Barr virus protein BZLF1 (via C-terminus); this interaction inhibits BZLF1-mediated lytic viral reactivation. Interacts also with EBNA1; this interaction promotes EBNA1-dependent transcription. In terms of processing, O-glycosylated. Post-translationally, phosphorylated by SYK. This phosphorylation plays an important role in the abolition of BLIMP1 repression by PAX5 in order to trigger plasma cell differentiation.

It is found in the nucleus. Functionally, transcription factor that plays an essential role in commitment of lymphoid progenitors to the B-lymphocyte lineage. Fulfills a dual role by repressing B-lineage inappropriate genes and simultaneously activating B-lineage-specific genes. In turn, regulates cell adhesion and migration, induces V(H)-to-D(H)J(H) recombination, facilitates pre-B-cell receptor signaling and promotes development to the mature B-cell stage. Repression of the cohesin-release factor WAPL causes global changes of the chromosomal architecture in pro-B cells to facilitate the generation of a diverse antibody repertoire. (Microbial infection) Plays an essential role in the maintenance of Epstein-Barr virus genome copy number within the host cell by promoting EBNA1/oriP-dependent binding and transcription. Also participates in the inhibition of lytic EBV reactivation by modulating viral BZLF1 activity. The sequence is that of Paired box protein Pax-5 (PAX5) from Homo sapiens (Human).